The primary structure comprises 395 residues: Ribose-phosphate pyrophosphokinase 2, chloroplastic (395 aa).

Residues Met1–Ser23 are compositionally biased toward low complexity. The interval Met1–Arg33 is disordered. A chloroplast-targeting transit peptide spans Met1–Cys42. Residues Asp209, His211, Asp220, and Asp224 each contribute to the Mg(2+) site. The interval Gly295–Thr310 is binding of phosphoribosylpyrophosphate.

Belongs to the ribose-phosphate pyrophosphokinase family.

It localises to the plastid. Its subcellular location is the chloroplast. It catalyses the reaction D-ribose 5-phosphate + ATP = 5-phospho-alpha-D-ribose 1-diphosphate + AMP + H(+). In Spinacia oleracea (Spinach), this protein is Ribose-phosphate pyrophosphokinase 2, chloroplastic (PRS2).